Here is a 1044-residue protein sequence, read N- to C-terminus: MPPPPHIKPENVLKRAQELIAVGQAPAALNVLHEHVTSKRTRSTPIVSLEPVMLLFVELCVDLRKGKAAKDGLYQYKNIAQNTNVGTIEVVLKKFIELAEKKVTEAQAKADEIQSSLESAAPSSNVEDLEAIETPETILLATVSGEQSRDRTDRAVVTPWLKFLWETYRTVLEILKNNARLEVMYQTTALQAFQFCLKYTRKTEFRRLCELLRNHVQNAAKYSAQMHAINLSDPDTLQRHLDTRFQQLNVAVELELWQEAFRSIEDIHTLLSLSKRPAKNVMMANYYEKLARIFLVSENYLFHAAAWNRYYNLLRQSAAALAAGQGTKKENPSVTDADMTKAASFVLLSALSIPVISTSRSRGALVDVDEVRKNKNTRLTNLLGMAQAPSRAVLFRDALNKGLLKRARPEIRDLYNILEVDFHPLSICKKITPILKQIGADPEMEKYVLPLQQVILTRLFQQLSQVYESVELKFIYELAQFPEPFQVTPAMIEKFIMNGCKKGDLAIRVDHISGVLTFDTDIFSSAKALHPGSAAGSAESEAGSVQRLQNTPAEIARLQLTRLAKTLHVTCMYVDPSYSEVRIQAKQAAQARAAAGVAKEHEETLARRVIIDKKKEAATDALQRKQREEETRKRIRTQQLQEAEKQRLLDEQREREKKRIKDEQDRIRQQELKKQLEELKSGVKGIDISELDLEDLDANRLRAIKLAQLEKEKNELNDKIRTTAKRIDHLERAFRREELKHIAEDYEAQKQHDMEVYEATKAETLKEAKEKHAEAVALKHRLSRLVPVYSNFRKEVSEKRHEEFEKRRKAAERDFEAKKKQRIREVQERRRRERAEREAEEQRQKEEEERARREEEERVAREEERRRVLTEEKAKREEERKKLDEIALKQKQREEEAEARRAARKAGVTEPPPRAAEPERTAPRLNIAPRTGGSSWRERQAAKEAAGGAAPAAAPAPEAPKEEAQPPRRTGGGYVPPHLRSGAGASAAPAAPPATEKYVPRHMRDSSSSQPPSRTQTPPAPAAEKPEGSGAPQKWVPRWKQQQS.

Residues 92-121 (LKKFIELAEKKVTEAQAKADEIQSSLESAA) adopt a coiled-coil conformation. Positions 339–523 (MTKAASFVLL…GVLTFDTDIF (185 aa)) constitute a PCI domain. The stretch at 611–907 (IDKKKEAATD…EARRAARKAG (297 aa)) forms a coiled coil. Over residues 797–901 (SEKRHEEFEK…QREEEAEARR (105 aa)) the composition is skewed to basic and acidic residues. Positions 797-1044 (SEKRHEEFEK…WVPRWKQQQS (248 aa)) are disordered. 2 stretches are compositionally biased toward low complexity: residues 943 to 956 (KEAA…AAPA) and 1006 to 1017 (SSSSQPPSRTQT).

This sequence belongs to the eIF-3 subunit A family. As to quaternary structure, component of the eukaryotic translation initiation factor 3 (eIF-3) complex.

The protein localises to the cytoplasm. RNA-binding component of the eukaryotic translation initiation factor 3 (eIF-3) complex, which is involved in protein synthesis of a specialized repertoire of mRNAs and, together with other initiation factors, stimulates binding of mRNA and methionyl-tRNAi to the 40S ribosome. The eIF-3 complex specifically targets and initiates translation of a subset of mRNAs involved in cell proliferation. In Aspergillus clavatus (strain ATCC 1007 / CBS 513.65 / DSM 816 / NCTC 3887 / NRRL 1 / QM 1276 / 107), this protein is Eukaryotic translation initiation factor 3 subunit A (tif32).